The primary structure comprises 342 residues: Dihydroorotase (342 aa).

Zn(2+)-binding residues include His13 and His15. Substrate is bound by residues 15-17 (HLR) and Asn41. Zn(2+)-binding residues include Lys98, His135, and His173. An N6-carboxylysine modification is found at Lys98. His135 provides a ligand contact to substrate. Leu218 is a substrate binding site. Asp246 contacts Zn(2+). Asp246 is a catalytic residue. Residues His250 and Ala262 each contribute to the substrate site.

Belongs to the metallo-dependent hydrolases superfamily. DHOase family. Class II DHOase subfamily. In terms of assembly, homodimer. Zn(2+) serves as cofactor.

The enzyme catalyses (S)-dihydroorotate + H2O = N-carbamoyl-L-aspartate + H(+). Its pathway is pyrimidine metabolism; UMP biosynthesis via de novo pathway; (S)-dihydroorotate from bicarbonate: step 3/3. In terms of biological role, catalyzes the reversible cyclization of carbamoyl aspartate to dihydroorotate. This is Dihydroorotase from Vibrio vulnificus (strain YJ016).